We begin with the raw amino-acid sequence, 114 residues long: Protein ORF3 (114 aa).

Hydrophobic stretches follow at residues 6 to 22 and 33 to 53; these read CALGLFCCCSSCFCLCC and AVVGGAAAVPAVVSGVTGLIL. The interval 28–68 is interaction with host HPX; that stretch reads VSRLAAVVGGAAAVPAVVSGVTGLILSPSQSPIFIQPTPSP. Positions 48 to 72 are interaction with the capsid protein; sequence VTGLILSPSQSPIFIQPTPSPPMSP. Residue S71 is modified to Phosphoserine; by host. The interval 72–114 is homodimerization, and interaction with host AMBP/bikunin; that stretch reads PLRPGLDLVFANPPDHSAPLGVTRPSAPPLPHVVDLPQLGPRR. The disordered stretch occupies residues 91–114; the sequence is LGVTRPSAPPLPHVVDLPQLGPRR. The tract at residues 95–104 is interaction with host SRC, HCK, FYN, PIK3R3 and GRB2; the sequence is RPSAPPLPHV. The PTAP/PSAP motif signature appears at 96–99; sequence PSAP.

The protein belongs to the hepevirus ORF3 protein family. As to quaternary structure, forms homooligomers. Interacts with host SRC, HCK, FYN, PIK3R3 and GRB2 (via SH3 domain); binding does not activate the kinases. Interacts with host AMBP/bikunin and AMBP/alpha-1-microglobulin peptides. Interacts with host HPX/hemopexin. Interacts (when phosphorylated) with capsid protein ORF2. Interacts with host TSG101; this interaction plays a role in viral release from the host cell. Interacts with host SIRPA; this interaction down-regulates the phosphorylation of host IRF3. Post-translationally, palmitoylated in the N-terminus.

It is found in the host endoplasmic reticulum membrane. The protein localises to the host cytoplasm. It localises to the host cytoskeleton. The protein resides in the virion. Its subcellular location is the host cell membrane. In terms of biological role, small multifunctional phosphoprotein involved in virion morphogenesis, egress and counteracting host innate immunity. Plays critical roles in the final steps of viral release by interacting with host TSG101, a member of the vacuolar protein-sorting pathway and using other cellular host proteins involved in vesicle formation pathway. Also acts as a viroporin and forms ion conductive pores allowing viral particle release. Impairs the generation of type I interferon by down-regulating host TLR3 and TLR7 as well as their downstream signaling pathways. Down-regulates the phosphorylation of host IRF3 via the interaction with host SIRP-alpha, thereby inhibiting IFN-I expression. Interacts with host microtubules. In Hepatitis E virus genotype 1 (isolate Human/Burma) (HEV-1), this protein is Protein ORF3.